A 737-amino-acid chain; its full sequence is Dynein axonemal intermediate chain 7 homolog (737 aa).

Polar residues predominate over residues 1 to 15 (MPPKSPNRSGKSTPT). Disordered stretches follow at residues 1-61 (MPPK…ERRA), 274-362 (KKVK…DDEE), and 410-452 (STVK…QQPP). Basic and acidic residues-rich tracts occupy residues 18-61 (RPGE…ERRA), 276-316 (VKDE…EGRQ), and 333-349 (EETK…DAVK). Polar residues-rich tracts occupy residues 417 to 429 (DNPN…SRVA) and 441 to 451 (PSKTPLEQQQP).

This sequence belongs to the DNAI7 family.

This chain is Dynein axonemal intermediate chain 7 homolog (AXP83.9), found in Ciona intestinalis (Transparent sea squirt).